The sequence spans 415 residues: Prostacyclin receptor (415 aa).

A disordered region spans residues 1–21; sequence MMASDGHPGPPSVTPGSPLSA. Over 1 to 44 the chain is Extracellular; the sequence is MMASDGHPGPPSVTPGSPLSAGGREWQGMAGSCWNITYVQDSVG. Cystine bridges form between C33/C193 and C120/C198. N-linked (GlcNAc...) asparagine glycosylation is present at N35. Residues 45–66 form a helical membrane-spanning segment; it reads PATSTLMFVAGVVGNGLALGIL. Over 67–79 the chain is Cytoplasmic; the sequence is GARRRSHPSAFAV. The helical transmembrane segment at 80–104 threads the bilayer; the sequence is LVTGLAVTDLLGTCFLSPAVFVAYA. Residues 105 to 122 lie on the Extracellular side of the membrane; the sequence is RNSSLLGLAHGGTMLCDT. The helical transmembrane segment at 123 to 143 threads the bilayer; the sequence is FAFAMTFFGLASTLILFAMAV. Residues 144–162 lie on the Cytoplasmic side of the membrane; the sequence is ERCLALSHPYLYAQLDGPR. The chain crosses the membrane as a helical span at residues 163–186; the sequence is CARFALPSIYAFCCLFCSLPLLGL. Residues 187–215 lie on the Extracellular side of the membrane; sequence GEHQQYCPGSWCFIRMRSAQPGGCAFSLA. A helical membrane pass occupies residues 216 to 236; the sequence is YASLMALLVTSIFFCNGSVTL. Residues 237–263 are Cytoplasmic-facing; it reads SLYHMYRQQRRHHGSFVPTSRAREDEV. A helical membrane pass occupies residues 264–288; the sequence is YHLILLALMTVIMAVCSLPLMIRGF. Residues 289–301 lie on the Extracellular side of the membrane; it reads TQAIAPDSREMGD. Residues 302 to 322 traverse the membrane as a helical segment; it reads LLAFRFNAFNPILDPWVFILF. Residues 323 to 415 lie on the Cytoplasmic side of the membrane; the sequence is RKAVFQRLKF…SEAIAACSLC (93 aa). The disordered stretch occupies residues 349–370; it reads PLSRPASGRRDPPAPTSLQAKE. The residue at position 365 (S365) is a Phosphoserine. C412 is subject to Cysteine methyl ester. Residue C412 is the site of S-farnesyl cysteine attachment. The propeptide at 413–415 is removed in mature form; the sequence is SLC.

Belongs to the G-protein coupled receptor 1 family. As to quaternary structure, interacts (non-isoprenylated C-terminus) with PDZK1. In terms of processing, isoprenylation does not influence ligand binding but is required for efficient coupling to the effectors adenylyl cyclase and phospholipase C.

It localises to the cell membrane. Receptor for prostacyclin (prostaglandin I2 or PGI2). The activity of this receptor is mediated by G(s) proteins which activate adenylate cyclase. In Mus musculus (Mouse), this protein is Prostacyclin receptor (Ptgir).